We begin with the raw amino-acid sequence, 349 residues long: Ferredoxin--NADP reductase 1 (349 aa).

Glu36, Lys44, Tyr48, Val88, Leu123, Asp290, and Ser331 together coordinate FAD.

This sequence belongs to the ferredoxin--NADP reductase type 2 family. Homodimer. FAD serves as cofactor.

It catalyses the reaction 2 reduced [2Fe-2S]-[ferredoxin] + NADP(+) + H(+) = 2 oxidized [2Fe-2S]-[ferredoxin] + NADPH. The sequence is that of Ferredoxin--NADP reductase 1 from Bacillus cytotoxicus (strain DSM 22905 / CIP 110041 / 391-98 / NVH 391-98).